The chain runs to 292 residues: MDFLNDHINVFGLIAALVILVLTIYESSSLIKEMRDSKSQGELMENGHLIDGIGEFANNVPVGWIASFMCTIVWAFWYFFFGYPLNSFSQIGQYNEEVKAHNQKFEAKWKNLGQKELVDMGQGIFLVHCSQCHGITAEGLHGSAQNLVRWGKEEGIMDTIKHGSKGMDYLAGEMPAMELDEKDAKAIASYVMAEISSVKKTKNPQLIDKGKELFESMGCTGCHGNDGKGLQENQVLAADLTTYGTENFLRNILTHGKKGNIGHMPSFKYKNFSDLQVKALPEFIQSLKPLED.

2 helical membrane-spanning segments follow: residues 11–31 (FGLIAALVILVLTIYESSSLI) and 62–82 (VGWIASFMCTIVWAFWYFFFG). Cytochrome c domains are found at residues 116–195 (ELVD…MAEI) and 205–288 (QLID…QSLK). Residues C129, C132, H133, M174, C219, C222, H223, and M264 each coordinate heme c.

It belongs to the CcoP / FixP family. In terms of assembly, component of the cbb3-type cytochrome c oxidase at least composed of CcoN, CcoO, CcoQ and CcoP. Heme c serves as cofactor.

The protein localises to the cell inner membrane. It participates in energy metabolism; oxidative phosphorylation. In terms of biological role, C-type cytochrome. Part of the cbb3-type cytochrome c oxidase complex. CcoP subunit is required for transferring electrons from donor cytochrome c via its heme groups to CcoO subunit. From there, electrons are shuttled to the catalytic binuclear center of CcoN subunit where oxygen reduction takes place. The complex also functions as a proton pump. The sequence is that of Cbb3-type cytochrome c oxidase subunit CcoP from Helicobacter pylori (Campylobacter pylori).